The following is a 443-amino-acid chain: Proline--tRNA ligase (443 aa).

This sequence belongs to the class-II aminoacyl-tRNA synthetase family. ProS type 2 subfamily. In terms of assembly, homodimer.

The protein localises to the cytoplasm. It carries out the reaction tRNA(Pro) + L-proline + ATP = L-prolyl-tRNA(Pro) + AMP + diphosphate. Its function is as follows. Catalyzes the attachment of proline to tRNA(Pro) in a two-step reaction: proline is first activated by ATP to form Pro-AMP and then transferred to the acceptor end of tRNA(Pro). The chain is Proline--tRNA ligase from Zymomonas mobilis subsp. mobilis (strain ATCC 31821 / ZM4 / CP4).